The primary structure comprises 1191 residues: MSVRKMVAIDGNEACASVAYRVSEVAVIYPITPSSTMGELSDEWSAKGLTNIWGAVPQVVEMQSEGGAAGACHGAIQTGSLGTTFTASQGLLLMIPNMYKIAGELTPFCMHVTARTLATHALSIFGDQSDVMACRQTGFAILASASVQEAHDLASVAHGASLESRIPFLHFFDGFRTSHEVNKIELMTDDDLHAMIDDDLVAAHRARALTPDTPVTRGTAQNPDTFFQAQEARNPFYDACPAIVQSYMDRLAALTGRRYGLFDYVGHPQAERVVVIMGSGAETVAETVDWLVARGEKIGVVKVRLFRPFSVDAFVAALPVSVRAIAVLDRCKESGAIGEPLYLDVVGALARAKALGLRAGIVDPAVIGGRYGLSSKEFTPAMVKAIFDELAKANPKQAFTVGIEDDVTHLSLSVDRSFRIESADIKRSVFFGLGADGTVGANKNSIKIISDSPTIHGQGYFVYDSKKSGAITISHLRFGPRPIRAPYLIDEADFIACHHFSFLDKVDVLETAAVGATLLLNSPHDKDTVWDALPRPVQQTIIDRDLKLFVIDANKVAQETGMGQRINTIMQTCFFALSGVMPRDEAIEEIKKAISKTYARKSQKVIDANFAAVDQTLSRLQSVTIPGVLTGHALPPLVSAGAPDFVRNVTAVMLAGKGDSLPVSAMPVDGTWPTETARWEKRDIAQQVCSWDADLCIQCNKCVMVCPHAALRVKAVPAEAAAALPASMNSTPYKGKDDLKGSAYVLALSPEDCTGCGICVEACPGKDKATGARSLTMHAREDVVSACKENWEIFLDLPDVARTSLRPTVKNSQFMTPLFEFSGACQGCGETPYLKLLTQMWGDRLMIANATGCSSIYGGNLPTSPYAKDANGRGPAWSNSLFEDNAEFGLGFRLALDQHRSEAKRLLGALAPQLSGVLVDGLVANAANNDEAAIAAQRERVVSLRAELGGLTGWQARALEGLADYLVEKVVWIVGGDGWAYDIGYGGLDHVISSGRNVNILVMDTEVYSNTGGQQSKSTPIGASAKFSVAGKALPKKDLGQIAMANGHVYVASIAFGASDNQTLRALSEAVSYEGPSLIIAYSHCIAHGYDLTCGLSQQKLAIETGYWPLYRFDPRKMGVGPALSLDGVQPSRPIGDYMANEGRFRIIRDADPERYAMLLEAAEENVRSRWALLRQLAGVADEQEGARAAQ.

4Fe-4S ferredoxin-type domains lie at 687-716 (QVCS…VKAV) and 744-773 (YVLA…TGAR). Residues Cys-696, Cys-699, Cys-702, Cys-706, Cys-753, Cys-756, Cys-759, Cys-763, Cys-825, Cys-828, Cys-853, and Cys-1085 each contribute to the [4Fe-4S] cluster site.

It belongs to the pyruvate:ferredoxin/flavodoxin oxidoreductase family. Requires [4Fe-4S] cluster as cofactor.

The enzyme catalyses oxidized [flavodoxin] + pyruvate + CoA + 2 H(+) = reduced [flavodoxin] + acetyl-CoA + CO2. In terms of biological role, oxidoreductase required for the transfer of electrons from pyruvate to flavodoxin, which reduces nitrogenase. In Rhodospirillum rubrum (strain ATCC 11170 / ATH 1.1.1 / DSM 467 / LMG 4362 / NCIMB 8255 / S1), this protein is Pyruvate-flavodoxin oxidoreductase (nifJ).